A 175-amino-acid polypeptide reads, in one-letter code: Nucleoside-triphosphatase THEP1 (175 aa).

Residues 16–23 (GMPGVGKT) and 103–110 (VAFIDEIG) contribute to the ATP site.

The protein belongs to the THEP1 NTPase family.

The catalysed reaction is a ribonucleoside 5'-triphosphate + H2O = a ribonucleoside 5'-diphosphate + phosphate + H(+). In terms of biological role, has nucleotide phosphatase activity towards ATP, GTP, CTP, TTP and UTP. May hydrolyze nucleoside diphosphates with lower efficiency. This is Nucleoside-triphosphatase THEP1 from Pyrobaculum calidifontis (strain DSM 21063 / JCM 11548 / VA1).